Here is a 362-residue protein sequence, read N- to C-terminus: D-alanine--D-alanine ligase (362 aa).

Residues 141–346 (KNIFAEAGLN…YPELIEELIR (206 aa)) enclose the ATP-grasp domain. Residue 174 to 229 (EEALGYPCFVKPANLGSSVGINKCKDREELEKAFEEAFQFDRKIIVEENIIGREVE) participates in ATP binding. Mg(2+) contacts are provided by D300, E313, and N315.

This sequence belongs to the D-alanine--D-alanine ligase family. Mg(2+) serves as cofactor. It depends on Mn(2+) as a cofactor.

Its subcellular location is the cytoplasm. The catalysed reaction is 2 D-alanine + ATP = D-alanyl-D-alanine + ADP + phosphate + H(+). It participates in cell wall biogenesis; peptidoglycan biosynthesis. In terms of biological role, cell wall formation. This chain is D-alanine--D-alanine ligase, found in Bacillus cytotoxicus (strain DSM 22905 / CIP 110041 / 391-98 / NVH 391-98).